We begin with the raw amino-acid sequence, 288 residues long: Homoserine kinase (288 aa).

Pro-79–Ala-89 provides a ligand contact to ATP.

The protein belongs to the GHMP kinase family. Homoserine kinase subfamily.

It localises to the cytoplasm. It catalyses the reaction L-homoserine + ATP = O-phospho-L-homoserine + ADP + H(+). It participates in amino-acid biosynthesis; L-threonine biosynthesis; L-threonine from L-aspartate: step 4/5. Catalyzes the ATP-dependent phosphorylation of L-homoserine to L-homoserine phosphate. This is Homoserine kinase from Listeria welshimeri serovar 6b (strain ATCC 35897 / DSM 20650 / CCUG 15529 / CIP 8149 / NCTC 11857 / SLCC 5334 / V8).